A 327-amino-acid polypeptide reads, in one-letter code: Leucotoxin LukDv (327 aa).

A signal peptide spans 1-26 (MKMKKLVKSSVASSIALLLLSNTVDA).

This sequence belongs to the aerolysin family. In terms of assembly, toxicity requires sequential binding and synergistic association of a class S and a class F component which form heterooligomeric complexes. LukEv (class S) associates with LukDv (class F).

Its subcellular location is the secreted. Part of a bi-component leucotoxin that acts by forming pores in the membrane of the target cells. The activity of LukEv-LukDv to rabbit leukocytes is similar to that of the Panton-Valentine leucocidin (PVL). LukEv-LukDv is hemolytic to rabbit red blood cells although the activity is only 8% of gamma-hemolysin. The protein is Leucotoxin LukDv (lukDv) of Staphylococcus aureus (strain NCTC 8325 / PS 47).